Reading from the N-terminus, the 54-residue chain is Beta-2-microglobulin (54 aa).

An Ig-like C1-type domain is found at 3–41; sequence KVELSDLSFNKDWSFYLLAHREFVPTATDKYACRVSHIT.

The protein belongs to the beta-2-microglobulin family. In terms of assembly, heterodimer of an alpha chain and a beta chain. Beta-2-microglobulin is the beta-chain of major histocompatibility complex class I molecules.

Its subcellular location is the secreted. Its function is as follows. Component of the class I major histocompatibility complex (MHC). Involved in the presentation of peptide antigens to the immune system. This Mesocricetus auratus (Golden hamster) protein is Beta-2-microglobulin (B2M).